A 238-amino-acid polypeptide reads, in one-letter code: DNA repair protein RecO (238 aa).

Belongs to the RecO family.

Its function is as follows. Involved in DNA repair and RecF pathway recombination. This chain is DNA repair protein RecO, found in Aliivibrio fischeri (strain ATCC 700601 / ES114) (Vibrio fischeri).